The following is a 1040-amino-acid chain: Multidrug resistance protein MdtB (1040 aa).

Transmembrane regions (helical) follow at residues 15–37 (LFIL…GIIG), 345–362 (FELM…YLFL), 367–389 (ATII…MVFL), 396–418 (LTLM…VIEN), 438–460 (GEIG…PLLF), 472–494 (FAVT…TPMM), 535–557 (HPWL…WIVI), 867–889 (VWLI…ESFI), 909–931 (LIIA…IGIV), 968–990 (ILMT…GVGT), and 1000–1022 (MVGG…YLLF).

The protein belongs to the resistance-nodulation-cell division (RND) (TC 2.A.6) family. MdtB subfamily. In terms of assembly, part of a tripartite efflux system composed of MdtA, MdtB and MdtC. MdtB forms a heteromultimer with MdtC.

It is found in the cell inner membrane. This Salmonella typhimurium (strain LT2 / SGSC1412 / ATCC 700720) protein is Multidrug resistance protein MdtB.